We begin with the raw amino-acid sequence, 334 residues long: N-acetyl-gamma-glutamyl-phosphate reductase (334 aa).

The active site involves C154.

This sequence belongs to the NAGSA dehydrogenase family. Type 1 subfamily.

The protein localises to the cytoplasm. It catalyses the reaction N-acetyl-L-glutamate 5-semialdehyde + phosphate + NADP(+) = N-acetyl-L-glutamyl 5-phosphate + NADPH + H(+). It participates in amino-acid biosynthesis; L-arginine biosynthesis; N(2)-acetyl-L-ornithine from L-glutamate: step 3/4. Its function is as follows. Catalyzes the NADPH-dependent reduction of N-acetyl-5-glutamyl phosphate to yield N-acetyl-L-glutamate 5-semialdehyde. The chain is N-acetyl-gamma-glutamyl-phosphate reductase from Shigella flexneri.